Consider the following 684-residue polypeptide: Kelch repeat and BTB domain-containing protein 7 (684 aa).

The disordered stretch occupies residues 1-27; it reads MQSREDVPRSRRLASPRGGRRPKRISK. Positions 10-26 are enriched in basic residues; sequence SRRLASPRGGRRPKRIS. Position 29 is a phosphoserine (Ser29). One can recognise a BTB domain in the interval 63-138; that stretch reads CDVTIEVVTP…CYTGRVSLSE (76 aa). Kelch repeat units follow at residues 386–435, 436–484, 486–523, 524–564, and 567–616; these read AVCV…YLNG, YIYI…VVQN, LYAVNSKRMLCYDPSHNMWLNCASLKRSDFQEACVFND, EIYC…IVNH, and KLLL…CLCA. Residues 630 to 666 form a disordered region; sequence ITEEDDARSESSTEWDLDGFSELDSESGSSSSFSDDE. Residues 631 to 654 are compositionally biased toward acidic residues; the sequence is TEEDDARSESSTEWDLDGFSELDS. Positions 668 to 671 match the ATG8 interaction motif (AIM) motif; sequence WVQV.

As to quaternary structure, core component of a BCR3 (BTB-CUL3-RBX1) E3 ubiquitin ligase complex, also named Cul3-RING ubiquitin ligase complex CUL3(KBTBD6/7), composed of CUL3, RBX1, KBTBD6 and KBTBD7. Interacts with GABARAP; the interaction is direct and is required for the ubiquitination of TIAM1. Interacts with GABARAPL1, GABARAPL2 and MAP1LC3B; the interaction is direct.

It is found in the cytoplasm. The protein resides in the nucleus. Its pathway is protein modification; protein ubiquitination. Its function is as follows. As part of the CUL3(KBTBD6/7) E3 ubiquitin ligase complex functions as a substrate adapter for the RAC1 guanine exchange factor (GEF) TIAM1, mediating its 'Lys-48' ubiquitination and proteasomal degradation. By controlling this ubiquitination, regulates RAC1 signal transduction and downstream biological processes including the organization of the cytoskeleton, cell migration and cell proliferation. Ubiquitination of TIAM1 requires the membrane-associated protein GABARAP which may restrict locally the activity of the complex. The sequence is that of Kelch repeat and BTB domain-containing protein 7 from Homo sapiens (Human).